The following is a 775-amino-acid chain: MLARRVVAALLLWLSCCVSALWRYYINSQDYSIFSTRSSIKLEYEGNSFVSWKIPESCKVENNTSPKTTLHCKRAGIHTIEPIARNQEVERHLTVDNSYICYLWYFTVVDVYYNLSQIVTIWVYDPESASTEELIRTAKKPSLIVTIWVYDPESASTEELIWTAKKPSLNSLVLTKQMNTLGQRPFIFTVEKRLAYHPGPLTSEGTWVIHLPMSTDDIAKVIQGNNVDFQDCRIADLHFLLTFPMEIVLEPPGYLPLTLPPGSPLMLSWDTCISTFALLATDQETFQTNDSFQTWTRVRAPPGILSDAQRHSLRDVLVFRTGILFLVETTVYLKTDNEFIKLDKSRGISETGILGLSKRRWCQIRYLYKSAAGRTFVLAWTKSEVYGGFGKFKFMRFTTTSRLKYLLKLPPTDTLEIITVEYSWHPLEAAALLSHCSVCTTTKNIRMVIFNSAYFSWKLQDFELQVPKEAKLEYRFLYSAMPDIIVWDEHQVYYGYRNFAVFGTITTASGETNLSSLSQGSNIHQVLTDSIGNVVVKMENNVMFYIKADITEAVILHTWVNTTAKTGLFFDKSFEVCILYYNENLDEKYQLQTQPYPLILELQSINKDLGDWCPYLAFQHNIHSQFYHMDKGESLTIWSQIVYPENRGLYIVLEHYGMRILTWTQNIEYEIASGFCTKTLITRFFQTTNYELVDNYYQLQKENTGLLVFQFRPSEFSRMCPTAKPVFEIDVGCDSSKHIMVQGFNRSGCQRRDFSYVIDKELLRESLSDNLVRNL.

Positions Met-1 to Ala-20 are cleaved as a signal peptide. 2 N-linked (GlcNAc...) asparagine glycosylation sites follow: Asn-62 and Asn-114.

This sequence belongs to the CATSPERD family.

The protein is Cation channel sperm-associated protein subunit epsilon-like protein of Mus musculus (Mouse).